Here is a 269-residue protein sequence, read N- to C-terminus: Shikimate dehydrogenase (NADP(+)) (269 aa).

Shikimate-binding positions include 22–24 (TLS) and Thr68. The active-site Proton acceptor is Lys72. Residues Asn93 and Asp104 each coordinate shikimate. Residues 128–132 (GAGGA), 152–157 (NRTNLR), and Phe210 contribute to the NADP(+) site. Tyr212 is a shikimate binding site. Gly233 is a binding site for NADP(+).

The protein belongs to the shikimate dehydrogenase family. Homodimer.

The enzyme catalyses shikimate + NADP(+) = 3-dehydroshikimate + NADPH + H(+). Its pathway is metabolic intermediate biosynthesis; chorismate biosynthesis; chorismate from D-erythrose 4-phosphate and phosphoenolpyruvate: step 4/7. In terms of biological role, involved in the biosynthesis of the chorismate, which leads to the biosynthesis of aromatic amino acids. Catalyzes the reversible NADPH linked reduction of 3-dehydroshikimate (DHSA) to yield shikimate (SA). This is Shikimate dehydrogenase (NADP(+)) from Saccharolobus islandicus (strain Y.N.15.51 / Yellowstone #2) (Sulfolobus islandicus).